The chain runs to 119 residues: Fluoride-specific ion channel FluC 2 (119 aa).

The next 2 membrane-spanning stretches (helical) occupy residues methionine 1–serine 21 and glycine 44–leucine 64. Residues glycine 70 and threonine 73 each contribute to the Na(+) site. The helical transmembrane segment at leucine 98–leucine 118 threads the bilayer.

Belongs to the fluoride channel Fluc/FEX (TC 1.A.43) family.

It localises to the cell membrane. It catalyses the reaction fluoride(in) = fluoride(out). Na(+) is not transported, but it plays an essential structural role and its presence is essential for fluoride channel function. Its function is as follows. Fluoride-specific ion channel. Important for reducing fluoride concentration in the cell, thus reducing its toxicity. This Lactobacillus delbrueckii subsp. bulgaricus (strain ATCC 11842 / DSM 20081 / BCRC 10696 / JCM 1002 / NBRC 13953 / NCIMB 11778 / NCTC 12712 / WDCM 00102 / Lb 14) protein is Fluoride-specific ion channel FluC 2.